We begin with the raw amino-acid sequence, 161 residues long: Endoribonuclease YbeY (161 aa).

His120, His124, and His130 together coordinate Zn(2+).

This sequence belongs to the endoribonuclease YbeY family. Requires Zn(2+) as cofactor.

The protein resides in the cytoplasm. Its function is as follows. Single strand-specific metallo-endoribonuclease involved in late-stage 70S ribosome quality control and in maturation of the 3' terminus of the 16S rRNA. The polypeptide is Endoribonuclease YbeY (Erythrobacter litoralis (strain HTCC2594)).